The primary structure comprises 1052 residues: Isoleucine--tRNA ligase (1052 aa).

Positions 58 to 68 (PFANGLPHYGH) match the 'HIGH' region motif. A 'KMSKS' region motif is present at residues 627–631 (KMSKS). Lys-630 contributes to the ATP binding site.

Belongs to the class-I aminoacyl-tRNA synthetase family. IleS type 2 subfamily. As to quaternary structure, monomer. Zn(2+) is required as a cofactor.

It localises to the cytoplasm. The enzyme catalyses tRNA(Ile) + L-isoleucine + ATP = L-isoleucyl-tRNA(Ile) + AMP + diphosphate. Its function is as follows. Catalyzes the attachment of isoleucine to tRNA(Ile). As IleRS can inadvertently accommodate and process structurally similar amino acids such as valine, to avoid such errors it has two additional distinct tRNA(Ile)-dependent editing activities. One activity is designated as 'pretransfer' editing and involves the hydrolysis of activated Val-AMP. The other activity is designated 'posttransfer' editing and involves deacylation of mischarged Val-tRNA(Ile). This Corynebacterium diphtheriae (strain ATCC 700971 / NCTC 13129 / Biotype gravis) protein is Isoleucine--tRNA ligase.